The following is a 352-amino-acid chain: Ion-translocating oxidoreductase complex subunit D (352 aa).

The next 4 helical transmembrane spans lie at 20–40 (IMLL…WFFG), 42–62 (GTLV…ALVL), 89–109 (IPPL…VIIA), and 123–143 (PAMI…TSWL). Thr-187 is subject to FMN phosphoryl threonine. A run of 5 helical transmembrane segments spans residues 214-234 (ILAG…GVWL), 242-262 (WHIP…GWLF), 267-287 (LAAP…FFIL), 301-321 (LIFG…GGYP), and 322-342 (DGVA…DYYT).

The protein belongs to the NqrB/RnfD family. In terms of assembly, the complex is composed of six subunits: RsxA, RsxB, RsxC, RsxD, RsxE and RsxG. The cofactor is FMN.

The protein localises to the cell inner membrane. In terms of biological role, part of a membrane-bound complex that couples electron transfer with translocation of ions across the membrane. Required to maintain the reduced state of SoxR. The polypeptide is Ion-translocating oxidoreductase complex subunit D (Escherichia coli O81 (strain ED1a)).